The primary structure comprises 343 residues: uncharacterized protein (343 aa).

This is an uncharacterized protein from Nostoc sp. (strain PCC 7120 / SAG 25.82 / UTEX 2576).